The following is a 194-amino-acid chain: GTP cyclohydrolase 1 (194 aa).

Residues cysteine 83, histidine 86, and cysteine 155 each coordinate Zn(2+).

Belongs to the GTP cyclohydrolase I family. As to quaternary structure, toroid-shaped homodecamer, composed of two pentamers of five dimers.

It catalyses the reaction GTP + H2O = 7,8-dihydroneopterin 3'-triphosphate + formate + H(+). The protein operates within cofactor biosynthesis; 7,8-dihydroneopterin triphosphate biosynthesis; 7,8-dihydroneopterin triphosphate from GTP: step 1/1. This is GTP cyclohydrolase 1 from Streptococcus pyogenes serotype M5 (strain Manfredo).